Consider the following 122-residue polypeptide: uncharacterized protein (122 aa).

The span at 1–15 (MAEPGGRGDYRKDGR) shows a compositional bias: basic and acidic residues. The segment at 1-49 (MAEPGGRGDYRKDGRLPSLSRSPLSTTLGTSPACGLEIPPTSGARPDGS) is disordered. A compositionally biased stretch (low complexity) spans 16–32 (LPSLSRSPLSTTLGTSP).

This is an uncharacterized protein from Homo sapiens (Human).